Reading from the N-terminus, the 345-residue chain is NADH-quinone oxidoreductase subunit H (345 aa).

The next 8 membrane-spanning stretches (helical) occupy residues 13–33 (VIIL…LLFL), 84–104 (FILA…VIPF), 115–135 (VAIL…IMGG), 161–181 (IGLI…GDIV), 190–210 (LFNW…ISCL), 248–268 (YIAI…GWLS), 277–297 (PLWM…VKAI), and 309–329 (LGWK…AFAA).

Belongs to the complex I subunit 1 family. In terms of assembly, NDH-1 is composed of 14 different subunits. Subunits NuoA, H, J, K, L, M, N constitute the membrane sector of the complex.

The protein resides in the cell inner membrane. It carries out the reaction a quinone + NADH + 5 H(+)(in) = a quinol + NAD(+) + 4 H(+)(out). Functionally, NDH-1 shuttles electrons from NADH, via FMN and iron-sulfur (Fe-S) centers, to quinones in the respiratory chain. The immediate electron acceptor for the enzyme in this species is believed to be ubiquinone. Couples the redox reaction to proton translocation (for every two electrons transferred, four hydrogen ions are translocated across the cytoplasmic membrane), and thus conserves the redox energy in a proton gradient. This subunit may bind ubiquinone. In Ruegeria sp. (strain TM1040) (Silicibacter sp.), this protein is NADH-quinone oxidoreductase subunit H.